A 115-amino-acid polypeptide reads, in one-letter code: Large ribosomal subunit protein P2 (115 aa).

Position 1 is an N-acetylmethionine (Met1). 2 positions are modified to phosphoserine: Ser17 and Ser19. Lys21 carries the N6-acetyllysine; alternate modification. The residue at position 21 (Lys21) is an N6-succinyllysine; alternate. Residues 69–90 (GAXAVAAAPGSXAPAAGSAPAA) are compositionally biased toward low complexity. The disordered stretch occupies residues 69-115 (GAXAVAAAPGSXAPAAGSAPAAAEEKKEEKKEESEESDDDMGFGLFD). A phosphoserine mark is found at Ser79 and Ser86. Positions 91–101 (AEEKKEEKKEE) are enriched in basic and acidic residues. Phosphoserine is present on residues Ser102 and Ser105.

This sequence belongs to the eukaryotic ribosomal protein P1/P2 family. As to quaternary structure, heterodimer with RPLP1 at the lateral ribosomal stalk of the large ribosomal subunit.

Functionally, plays an important role in the elongation step of protein synthesis. In Sus scrofa (Pig), this protein is Large ribosomal subunit protein P2 (RPLP2).